Consider the following 60-residue polypeptide: MAVPKRKTTPSKRGMRRSADALKQPAYVENPDSGELHRPHHVDLKSGMYRGKQILKPKGE.

A compositionally biased stretch (basic residues) spans 1–16 (MAVPKRKTTPSKRGMR). Residues 1-60 (MAVPKRKTTPSKRGMRRSADALKQPAYVENPDSGELHRPHHVDLKSGMYRGKQILKPKGE) are disordered. Basic and acidic residues predominate over residues 34–44 (GELHRPHHVDL).

The protein belongs to the bacterial ribosomal protein bL32 family.

This Parvibaculum lavamentivorans (strain DS-1 / DSM 13023 / NCIMB 13966) protein is Large ribosomal subunit protein bL32.